A 536-amino-acid polypeptide reads, in one-letter code: Glutamyl-tRNA(Gln) amidotransferase subunit B, mitochondrial (536 aa).

The N-terminal 8 residues, 1–8 (MLRVHRLY), are a transit peptide targeting the mitochondrion.

This sequence belongs to the GatB/GatE family. GatB subfamily. Subunit of the heterotrimeric GatFAB amidotransferase (AdT) complex, composed of A, B and F subunits.

It localises to the mitochondrion. The enzyme catalyses L-glutamyl-tRNA(Gln) + L-glutamine + ATP + H2O = L-glutaminyl-tRNA(Gln) + L-glutamate + ADP + phosphate + H(+). Its function is as follows. Allows the formation of correctly charged Gln-tRNA(Gln) through the transamidation of misacylated Glu-tRNA(Gln) in the mitochondria. The reaction takes place in the presence of glutamine and ATP through an activated gamma-phospho-Glu-tRNA(Gln). The chain is Glutamyl-tRNA(Gln) amidotransferase subunit B, mitochondrial from Eremothecium gossypii (strain ATCC 10895 / CBS 109.51 / FGSC 9923 / NRRL Y-1056) (Yeast).